Consider the following 632-residue polypeptide: Extracellular metalloproteinase 2 (632 aa).

A signal peptide spans Met1–Gly19. Residues Leu20–Ser244 constitute a propeptide that is removed on maturation. Asn270 carries N-linked (GlcNAc...) asparagine glycosylation. Residue His429 participates in Zn(2+) binding. The active site involves Glu430. His433 provides a ligand contact to Zn(2+).

It belongs to the peptidase M36 family. Zn(2+) serves as cofactor.

The protein localises to the secreted. Secreted metalloproteinase probably acting as a virulence factor. The sequence is that of Extracellular metalloproteinase 2 (MEP2) from Arthroderma benhamiae (Trichophyton mentagrophytes).